The primary structure comprises 440 residues: 3-phosphoshikimate 1-carboxyvinyltransferase (440 aa).

Lys-19, Ser-20, and Arg-24 together coordinate 3-phosphoshikimate. Lys-19 lines the phosphoenolpyruvate pocket. Positions 92 and 121 each coordinate phosphoenolpyruvate. Positions 166, 168, 315, and 342 each coordinate 3-phosphoshikimate. Gln-168 provides a ligand contact to phosphoenolpyruvate. The active-site Proton acceptor is the Asp-315. Arg-346 and Arg-399 together coordinate phosphoenolpyruvate.

This sequence belongs to the EPSP synthase family. Monomer.

The protein resides in the cytoplasm. The enzyme catalyses 3-phosphoshikimate + phosphoenolpyruvate = 5-O-(1-carboxyvinyl)-3-phosphoshikimate + phosphate. It participates in metabolic intermediate biosynthesis; chorismate biosynthesis; chorismate from D-erythrose 4-phosphate and phosphoenolpyruvate: step 6/7. Functionally, catalyzes the transfer of the enolpyruvyl moiety of phosphoenolpyruvate (PEP) to the 5-hydroxyl of shikimate-3-phosphate (S3P) to produce enolpyruvyl shikimate-3-phosphate and inorganic phosphate. The chain is 3-phosphoshikimate 1-carboxyvinyltransferase from Leptospira interrogans serogroup Icterohaemorrhagiae serovar Lai (strain 56601).